The following is a 255-amino-acid chain: Tryptophan synthase alpha chain (255 aa).

Catalysis depends on proton acceptor residues glutamate 49 and aspartate 60.

The protein belongs to the TrpA family. In terms of assembly, tetramer of two alpha and two beta chains.

It catalyses the reaction (1S,2R)-1-C-(indol-3-yl)glycerol 3-phosphate + L-serine = D-glyceraldehyde 3-phosphate + L-tryptophan + H2O. It functions in the pathway amino-acid biosynthesis; L-tryptophan biosynthesis; L-tryptophan from chorismate: step 5/5. Its function is as follows. The alpha subunit is responsible for the aldol cleavage of indoleglycerol phosphate to indole and glyceraldehyde 3-phosphate. The protein is Tryptophan synthase alpha chain of Desulfovibrio desulfuricans (strain ATCC 27774 / DSM 6949 / MB).